The primary structure comprises 1550 residues: Gag-Pol polyprotein (1550 aa).

Glycine 2 carries N-myristoyl glycine; by host lipidation. The tract at residues 7–31 (VLRGKKADELEKVRLRPGGKKKYRL) is interaction with Gp41. A Nuclear export signal motif is present at residues 16 to 22 (LEKVRLR). A Nuclear localization signal motif is present at residues 26–32 (KKKYRLK). The segment at 110–136 (AETGTAEKMPNTSRPTAPPSGKRGNYP) is disordered. Tyrosine 135 bears the Phosphotyrosine; by host mark. The tract at residues 191–228 (NCVGDHQAAMQIIREIINEEAADWDSQHPIPGPLPAGQ) is interaction with human PPIA/CYPA and NUP153. A dimerization/Multimerization of capsid protein p24 region spans residues 279-365 (YNPTNILDIK…GGPGQKARLM (87 aa)). 2 CCHC-type zinc fingers span residues 389–406 (IRYW…QCRA) and 410–427 (QGCW…NCPE). The disordered stretch occupies residues 437-508 (PTGKEASQLP…ERDTSQRGDR (72 aa)). Residues 456–469 (TNSTSGRSSSGTVG) show a composition bias toward low complexity. A compositionally biased stretch (basic and acidic residues) spans 497–508 (RAERDTSQRGDR). The dimerization of protease stretch occupies residues 513-517 (PQFSL). The region spanning 532–601 (VEVLLDTGAD…TPINIFGRNI (70 aa)) is the Peptidase A2 domain. The For protease activity; shared with dimeric partner role is filled by aspartate 537. Dimerization of protease regions lie at residues 561–567 (GIGGFIN) and 600–612 (NILT…LNLP). Positions 655–845 (EGQLEEAPPT…PPFQWMGCEL (191 aa)) constitute a Reverse transcriptase domain. 3 residues coordinate Mg(2+): aspartate 721, aspartate 796, and aspartate 797. Positions 838-846 (FQWMGCELW) are RT 'primer grip'. The Tryptophan repeat motif signature appears at 1008–1024 (WEQWWDNYWQVTWIPEW). Residues 1044-1167 (IPGAETFYTD…VDHLVSQGIR (124 aa)) enclose the RNase H type-1 domain. Aspartate 1053, glutamate 1088, aspartate 1108, and aspartate 1159 together coordinate Mg(2+). An Integrase-type zinc finger spans residues 1173–1214 (EKIEPAQEEHEKYHSIIKELTHKFGIPLLVARQIVNSCAQCQ). 4 residues coordinate Zn(2+): histidine 1182, histidine 1186, cysteine 1210, and cysteine 1213. The region spanning 1223–1374 (QVNAEIGVWQ…TPAERLINMI (152 aa)) is the Integrase catalytic domain. Mg(2+)-binding residues include aspartate 1234, aspartate 1286, and glutamate 1322. The segment at residues 1393-1440 (FQVYYREGRDQLWKGPGELLWKGEGAVIVKVGTDIKVVPRRKAKIIRD) is a DNA-binding region (integrase-type).

As to quaternary structure, homotrimer; further assembles as hexamers of trimers. Interacts with gp41 (via C-terminus). Interacts with host CALM1; this interaction induces a conformational change in the Matrix protein, triggering exposure of the myristate group. Interacts with host AP3D1; this interaction allows the polyprotein trafficking to multivesicular bodies during virus assembly. Part of the pre-integration complex (PIC) which is composed of viral genome, matrix protein, Vpr and integrase. In terms of assembly, homodimer; the homodimer further multimerizes as homohexamers or homopentamers. Interacts with human PPIA/CYPA. Interacts with human NUP153. Interacts with host PDZD8; this interaction stabilizes the capsid. Interacts with monkey TRIM5; this interaction destabilizes the capsid. Homodimer, whose active site consists of two apposed aspartic acid residues. As to quaternary structure, heterodimer of p66 RT and p51 RT (RT p66/p51). Heterodimerization of RT is essential for DNA polymerase activity. The overall folding of the subdomains is similar in p66 RT and p51 RT but the spatial arrangements of the subdomains are dramatically different. In terms of assembly, homotetramer; may further associate as a homohexadecamer. Part of the pre-integration complex (PIC) which is composed of viral genome, matrix protein, Vpr and integrase. Interacts with human SMARCB1/INI1 and human PSIP1/LEDGF isoform 1. Interacts with human KPNA3; this interaction might play a role in nuclear import of the pre-integration complex. Interacts with human NUP153; this interaction might play a role in nuclear import of the pre-integration complex. Mg(2+) serves as cofactor. Specific enzymatic cleavages by the viral protease yield mature proteins. The protease is released by autocatalytic cleavage. The polyprotein is cleaved during and after budding, this process is termed maturation. Proteolytic cleavage of p66 RT removes the RNase H domain to yield the p51 RT subunit. Nucleocapsid protein p7 might be further cleaved after virus entry.

It is found in the host cell membrane. The protein resides in the host endosome. It localises to the host multivesicular body. Its subcellular location is the virion membrane. The protein localises to the host nucleus. It is found in the host cytoplasm. The protein resides in the virion. The catalysed reaction is Endopeptidase for which the P1 residue is preferably hydrophobic.. It carries out the reaction Endohydrolysis of RNA in RNA/DNA hybrids. Three different cleavage modes: 1. sequence-specific internal cleavage of RNA. Human immunodeficiency virus type 1 and Moloney murine leukemia virus enzymes prefer to cleave the RNA strand one nucleotide away from the RNA-DNA junction. 2. RNA 5'-end directed cleavage 13-19 nucleotides from the RNA end. 3. DNA 3'-end directed cleavage 15-20 nucleotides away from the primer terminus.. The enzyme catalyses 3'-end directed exonucleolytic cleavage of viral RNA-DNA hybrid.. It catalyses the reaction DNA(n) + a 2'-deoxyribonucleoside 5'-triphosphate = DNA(n+1) + diphosphate. Protease: The viral protease is inhibited by many synthetic protease inhibitors (PIs), such as amprenavir, atazanavir, indinavir, loprinavir, nelfinavir, ritonavir and saquinavir. Use of protease inhibitors in tritherapy regimens permit more ambitious therapeutic strategies. Reverse transcriptase/ribonuclease H: RT can be inhibited either by nucleoside RT inhibitors (NRTIs) or by non nucleoside RT inhibitors (NNRTIs). NRTIs act as chain terminators, whereas NNRTIs inhibit DNA polymerization by binding a small hydrophobic pocket near the RT active site and inducing an allosteric change in this region. Classical NRTIs are abacavir, adefovir (PMEA), didanosine (ddI), lamivudine (3TC), stavudine (d4T), tenofovir (PMPA), zalcitabine (ddC), and zidovudine (AZT). Classical NNRTIs are atevirdine (BHAP U-87201E), delavirdine, efavirenz (DMP-266), emivirine (I-EBU), and nevirapine (BI-RG-587). The tritherapies used as a basic effective treatment of AIDS associate two NRTIs and one NNRTI. Mediates, with Gag polyprotein, the essential events in virion assembly, including binding the plasma membrane, making the protein-protein interactions necessary to create spherical particles, recruiting the viral Env proteins, and packaging the genomic RNA via direct interactions with the RNA packaging sequence (Psi). Gag-Pol polyprotein may regulate its own translation, by the binding genomic RNA in the 5'-UTR. At low concentration, the polyprotein would promote translation, whereas at high concentration, the polyprotein would encapsidate genomic RNA and then shut off translation. In terms of biological role, targets the polyprotein to the plasma membrane via a multipartite membrane-binding signal, that includes its myristoylated N-terminus. Matrix protein is part of the pre-integration complex. Implicated in the release from host cell mediated by Vpu. Binds to RNA. Functionally, forms the conical core that encapsulates the genomic RNA-nucleocapsid complex in the virion. Most core are conical, with only 7% tubular. The core is constituted by capsid protein hexamer subunits. The core is disassembled soon after virion entry. Host restriction factors such as TRIM5-alpha or TRIMCyp bind retroviral capsids and cause premature capsid disassembly, leading to blocks in reverse transcription. Capsid restriction by TRIM5 is one of the factors which restricts HIV-1 to the human species. Host PIN1 apparently facilitates the virion uncoating. On the other hand, interactions with PDZD8 or CYPA stabilize the capsid. Its function is as follows. Encapsulates and protects viral dimeric unspliced genomic RNA (gRNA). Binds these RNAs through its zinc fingers. Acts as a nucleic acid chaperone which is involved in rearangement of nucleic acid secondary structure during gRNA retrotranscription. Also facilitates template switch leading to recombination. As part of the polyprotein, participates in gRNA dimerization, packaging, tRNA incorporation and virion assembly. Aspartyl protease that mediates proteolytic cleavages of Gag and Gag-Pol polyproteins during or shortly after the release of the virion from the plasma membrane. Cleavages take place as an ordered, step-wise cascade to yield mature proteins. This process is called maturation. Displays maximal activity during the budding process just prior to particle release from the cell. Also cleaves Nef and Vif, probably concomitantly with viral structural proteins on maturation of virus particles. Hydrolyzes host EIF4GI and PABP1 in order to shut off the capped cellular mRNA translation. The resulting inhibition of cellular protein synthesis serves to ensure maximal viral gene expression and to evade host immune response. In terms of biological role, multifunctional enzyme that converts the viral RNA genome into dsDNA in the cytoplasm, shortly after virus entry into the cell. This enzyme displays a DNA polymerase activity that can copy either DNA or RNA templates, and a ribonuclease H (RNase H) activity that cleaves the RNA strand of RNA-DNA heteroduplexes in a partially processive 3' to 5' endonucleasic mode. Conversion of viral genomic RNA into dsDNA requires many steps. A tRNA(3)-Lys binds to the primer-binding site (PBS) situated at the 5'-end of the viral RNA. RT uses the 3' end of the tRNA primer to perform a short round of RNA-dependent minus-strand DNA synthesis. The reading proceeds through the U5 region and ends after the repeated (R) region which is present at both ends of viral RNA. The portion of the RNA-DNA heteroduplex is digested by the RNase H, resulting in a ssDNA product attached to the tRNA primer. This ssDNA/tRNA hybridizes with the identical R region situated at the 3' end of viral RNA. This template exchange, known as minus-strand DNA strong stop transfer, can be either intra- or intermolecular. RT uses the 3' end of this newly synthesized short ssDNA to perform the RNA-dependent minus-strand DNA synthesis of the whole template. RNase H digests the RNA template except for two polypurine tracts (PPTs) situated at the 5'-end and near the center of the genome. It is not clear if both polymerase and RNase H activities are simultaneous. RNase H probably can proceed both in a polymerase-dependent (RNA cut into small fragments by the same RT performing DNA synthesis) and a polymerase-independent mode (cleavage of remaining RNA fragments by free RTs). Secondly, RT performs DNA-directed plus-strand DNA synthesis using the PPTs that have not been removed by RNase H as primers. PPTs and tRNA primers are then removed by RNase H. The 3' and 5' ssDNA PBS regions hybridize to form a circular dsDNA intermediate. Strand displacement synthesis by RT to the PBS and PPT ends produces a blunt ended, linear dsDNA copy of the viral genome that includes long terminal repeats (LTRs) at both ends. Functionally, catalyzes viral DNA integration into the host chromosome, by performing a series of DNA cutting and joining reactions. This enzyme activity takes place after virion entry into a cell and reverse transcription of the RNA genome in dsDNA. The first step in the integration process is 3' processing. This step requires a complex comprising the viral genome, matrix protein, Vpr and integrase. This complex is called the pre-integration complex (PIC). The integrase protein removes 2 nucleotides from each 3' end of the viral DNA, leaving recessed CA OH's at the 3' ends. In the second step, the PIC enters cell nucleus. This process is mediated through integrase and Vpr proteins, and allows the virus to infect a non dividing cell. This ability to enter the nucleus is specific of lentiviruses, other retroviruses cannot and rely on cell division to access cell chromosomes. In the third step, termed strand transfer, the integrase protein joins the previously processed 3' ends to the 5' ends of strands of target cellular DNA at the site of integration. The 5'-ends are produced by integrase-catalyzed staggered cuts, 5 bp apart. A Y-shaped, gapped, recombination intermediate results, with the 5'-ends of the viral DNA strands and the 3' ends of target DNA strands remaining unjoined, flanking a gap of 5 bp. The last step is viral DNA integration into host chromosome. This involves host DNA repair synthesis in which the 5 bp gaps between the unjoined strands are filled in and then ligated. Since this process occurs at both cuts flanking the HIV genome, a 5 bp duplication of host DNA is produced at the ends of HIV-1 integration. Alternatively, Integrase may catalyze the excision of viral DNA just after strand transfer, this is termed disintegration. The chain is Gag-Pol polyprotein (gag-pol) from Homo sapiens (Human).